Reading from the N-terminus, the 127-residue chain is MRFLFLLFIVFPAIEIGIFLFLGNLIGILPTVLFMILTGIIGAAAAKKQGTEVYYKVQRDLQYGKMPGEAIADGLCIFIGGLLLMLPGFLSDLAGACLLIPFTRGWCKPILFKWLRGMSKNKRIIIK.

4 consecutive transmembrane segments (helical) span residues 3–22, 26–46, 70–90, and 93–115; these read FLFLLFIVFPAIEIGIFLFL, IGILPTVLFMILTGIIGAAAA, AIADGLCIFIGGLLLMLPGFL, and LAGACLLIPFTRGWCKPILFKWL.

The protein belongs to the UPF0716 (FxsA) family.

It localises to the cell membrane. This is UPF0716 protein YtzA (ytzA) from Bacillus subtilis (strain 168).